The primary structure comprises 310 residues: Phosphoribosylaminoimidazole-succinocarboxamide synthase (310 aa).

The protein belongs to the SAICAR synthetase family.

The enzyme catalyses 5-amino-1-(5-phospho-D-ribosyl)imidazole-4-carboxylate + L-aspartate + ATP = (2S)-2-[5-amino-1-(5-phospho-beta-D-ribosyl)imidazole-4-carboxamido]succinate + ADP + phosphate + 2 H(+). It functions in the pathway purine metabolism; IMP biosynthesis via de novo pathway; 5-amino-1-(5-phospho-D-ribosyl)imidazole-4-carboxamide from 5-amino-1-(5-phospho-D-ribosyl)imidazole-4-carboxylate: step 1/2. The chain is Phosphoribosylaminoimidazole-succinocarboxamide synthase from Xanthomonas campestris pv. campestris (strain B100).